The following is a 234-amino-acid chain: uncharacterized protein (234 aa).

In terms of domain architecture, tRNA-binding spans 103 to 211 (LAKKVPFVVC…SHIKIGKSFL (109 aa)).

This is an uncharacterized protein from Mycoplasma pneumoniae (strain ATCC 29342 / M129 / Subtype 1) (Mycoplasmoides pneumoniae).